The primary structure comprises 156 residues: Small ribosomal subunit protein uS7 (156 aa).

This sequence belongs to the universal ribosomal protein uS7 family. In terms of assembly, part of the 30S ribosomal subunit. Contacts proteins S9 and S11.

In terms of biological role, one of the primary rRNA binding proteins, it binds directly to 16S rRNA where it nucleates assembly of the head domain of the 30S subunit. Is located at the subunit interface close to the decoding center, probably blocks exit of the E-site tRNA. This is Small ribosomal subunit protein uS7 from Methylococcus capsulatus (strain ATCC 33009 / NCIMB 11132 / Bath).